Reading from the N-terminus, the 224-residue chain is UPF0441 protein PC1_0312 (224 aa).

The segment at 178 to 224 (PKTALAPKPATTSTITRGGFGETVAKQNSMQRSSASSSSSSSRSMGG) is disordered. A compositionally biased stretch (low complexity) spans 209-224 (RSSASSSSSSSRSMGG).

This sequence belongs to the UPF0441 family.

The chain is UPF0441 protein PC1_0312 from Pectobacterium carotovorum subsp. carotovorum (strain PC1).